The sequence spans 872 residues: MSDIKNFEFTPIGYIKSKSGENDAKETLMSPTGASVRSPGSVGHVRKARRRSINDTVNSSRVENDNDTFDETLPELEMRKLPQYRRVPESRTSARNSGAAPQEEQNRNDYSDILSKTSNPIKDQEQKIKDLEHENTVLKVKNVSYRSLLANYSGGSSQNNINLVEEVSIWKTKYLETNEKLLKVKQDFESYVQKMEQEKEVNTDQEKTKEPEVIPIDNPEYIKEREHILEELERVTEDFKNLRDRYNDLEIKFLSIQNELDEKKQEFESSTARLNEEIHTLKSTIDDKDATISEFKRKLGNAEDQLASIDDQNGNQNQKLLHDLKEREDAIDGLKEDIIEKENAIVHYKEEIQDKQNQLKESESKYAEVQKEFEDFKRELKKQTFEFEDGKKSTSRQLQELSVEKIQLEKQVCNLRGQIEKLEQQHRLTQSENDGLRTKLKHIESDLKNEKSRTEVKIKDLTSDLEDARKNLGEANNTIKELHHEIIKNATKSKDQLSEEVVEKDKEIDQLKHRVQRLDEELRTSQAELDKATKNREVDHELEIRRLQNKHEIEQESLKRELAHMTDEKERLVDLHRLDIETWERQIEALRKENENLISREHKESNNIEITLQDKNIQIRRLEADIVQLNEERNDILNKLRSLEQAKDRYKSEMKDALETISRLRVDLENNKSLKDSKDSLIERKYEKLKDEFKLMKKGYLDEMIKLQSRNRELNSDLQKRMDPSISTSANTTLADKLDYYKLKYNDEVRHNNDLRVINEYLNRVLRASAQDIRLNLLKVENDLNIDIHKENVPLSAPLSSSGGRPYSSSYTREFDKYDYRYRQKGKRFKTVALAVLAVIRMYRAAKKHNWNEQRIRYLQRKIIAKEDRITW.

The tract at residues 15-121 (IKSKSGENDA…DILSKTSNPI (107 aa)) is disordered. Positions 65–74 (DNDTFDETLP) are enriched in acidic residues. Residues 176 to 723 (ETNEKLLKVK…LNSDLQKRMD (548 aa)) are a coiled coil.

It belongs to the SPC110 family. Homodimer.

It localises to the nucleus. The protein localises to the cytoplasm. Its subcellular location is the cytoskeleton. It is found in the microtubule organizing center. The protein resides in the spindle pole body. Its function is as follows. Component of the spindle pole body (SPB) required for the proper execution of spindle pole body (SPB) duplication. Potential role in cross-linking filaments or anchoring other molecules. It is essential for growth. This Candida glabrata (strain ATCC 2001 / BCRC 20586 / JCM 3761 / NBRC 0622 / NRRL Y-65 / CBS 138) (Yeast) protein is Spindle pole body component 110 (SPC110).